A 74-amino-acid polypeptide reads, in one-letter code: Dermaseptin-B3 (74 aa).

An N-terminal signal peptide occupies residues 1–22 (MAFLKKSVFLVLFLGLVSLSIC). The propeptide occupies 23-43 (EEEKREEENEEKQEDDEQSEE).

In terms of tissue distribution, expressed by the skin glands.

The protein localises to the secreted. Possesses a potent antimicrobial activity against Gram-positive and Gram-negative bacteria. Probably acts by disturbing membrane functions with its amphipathic structure. This chain is Dermaseptin-B3, found in Phyllomedusa bicolor (Two-colored leaf frog).